The sequence spans 320 residues: tRNA-cytidine(32) 2-sulfurtransferase (320 aa).

A PP-loop motif motif is present at residues Ser54 to Ser59. The [4Fe-4S] cluster site is built by Cys129, Cys132, and Cys220.

It belongs to the TtcA family. As to quaternary structure, homodimer. It depends on Mg(2+) as a cofactor. Requires [4Fe-4S] cluster as cofactor.

Its subcellular location is the cytoplasm. The enzyme catalyses cytidine(32) in tRNA + S-sulfanyl-L-cysteinyl-[cysteine desulfurase] + AH2 + ATP = 2-thiocytidine(32) in tRNA + L-cysteinyl-[cysteine desulfurase] + A + AMP + diphosphate + H(+). Its pathway is tRNA modification. Its function is as follows. Catalyzes the ATP-dependent 2-thiolation of cytidine in position 32 of tRNA, to form 2-thiocytidine (s(2)C32). The sulfur atoms are provided by the cysteine/cysteine desulfurase (IscS) system. The polypeptide is tRNA-cytidine(32) 2-sulfurtransferase (Bordetella parapertussis (strain 12822 / ATCC BAA-587 / NCTC 13253)).